The following is a 596-amino-acid chain: MLPAHKLTLETLLAETVKQVATASQGASEAAFVSPAITLERPKVAAHGDVACNVAMQLAKPLRANPRQLAQQIVDALLAQPQAKGLVEAAEVAGPGFINLRLAAAAKQAVIAAVFAEKEAFGRSQRDAGKHVLIEFVSANPTGPLHVGHGRQAALGDALSNVLASQGYDVHREFYYNDAGVQIQTLALSTQARARGLAPGDAGWPASAYNGEYIAEIARDYLNGVTVAASDGEPVTGARDVEDLEAIRRFAVAYLRREQDMDLQAFGVKFDQYYLESSLYKEGRVEKTVEALIAAGKTYEQEGALWLRTTDDGDDKDRVMRKTDGTYTYFVPDVAYHVAKWERGFTKVINVQGSDHHGTIARVRAGLQGLGVGIPKGYPDYILHKMVTVMRNGEEVKISKRAGSYVTVRDLIEWSGGATPGSEAAVDLIDEETIRRGRDAVRFFLISRKADTEFVFDIDLALKQNDENPVHYVQYAHARICSVIAECKARYSTDESTLADVDVSPLTSERAMALLNKLAEFPDMLQHAADELAPHAVAFYLRDLAGEFHSFYNDRTERVLVDDAAERNARVALLAATRQVLANGLATIGVSAPVKM.

Positions A139–H149 match the 'HIGH' region motif.

Belongs to the class-I aminoacyl-tRNA synthetase family. In terms of assembly, monomer.

The protein localises to the cytoplasm. It carries out the reaction tRNA(Arg) + L-arginine + ATP = L-arginyl-tRNA(Arg) + AMP + diphosphate. The chain is Arginine--tRNA ligase from Paraburkholderia phytofirmans (strain DSM 17436 / LMG 22146 / PsJN) (Burkholderia phytofirmans).